A 458-amino-acid polypeptide reads, in one-letter code: UDP-N-acetylmuramoylalanine--D-glutamate ligase (458 aa).

Position 124–130 (124–130 (GSDGKTT)) interacts with ATP.

It belongs to the MurCDEF family.

It localises to the cytoplasm. It catalyses the reaction UDP-N-acetyl-alpha-D-muramoyl-L-alanine + D-glutamate + ATP = UDP-N-acetyl-alpha-D-muramoyl-L-alanyl-D-glutamate + ADP + phosphate + H(+). It participates in cell wall biogenesis; peptidoglycan biosynthesis. Cell wall formation. Catalyzes the addition of glutamate to the nucleotide precursor UDP-N-acetylmuramoyl-L-alanine (UMA). In Clostridium botulinum (strain 657 / Type Ba4), this protein is UDP-N-acetylmuramoylalanine--D-glutamate ligase.